Reading from the N-terminus, the 907-residue chain is Leucine--tRNA ligase (907 aa).

Residues 42–52 carry the 'HIGH' region motif; it reads PYPSGKLHMGH. The 'KMSKS' region signature appears at 651–655; the sequence is TMSKS. Lysine 654 serves as a coordination point for ATP.

Belongs to the class-I aminoacyl-tRNA synthetase family.

The protein localises to the cytoplasm. The enzyme catalyses tRNA(Leu) + L-leucine + ATP = L-leucyl-tRNA(Leu) + AMP + diphosphate. This Verminephrobacter eiseniae (strain EF01-2) protein is Leucine--tRNA ligase.